Reading from the N-terminus, the 185-residue chain is ATP synthase subunit b (185 aa).

The chain crosses the membrane as a helical span at residues 27 to 47 (GALIWKGLNILAFLGIVYYFG).

This sequence belongs to the ATPase B chain family. In terms of assembly, F-type ATPases have 2 components, F(1) - the catalytic core - and F(0) - the membrane proton channel. F(1) has five subunits: alpha(3), beta(3), gamma(1), delta(1), epsilon(1). F(0) has three main subunits: a(1), b(2) and c(10-14). The alpha and beta chains form an alternating ring which encloses part of the gamma chain. F(1) is attached to F(0) by a central stalk formed by the gamma and epsilon chains, while a peripheral stalk is formed by the delta and b chains.

The protein resides in the cell inner membrane. In terms of biological role, f(1)F(0) ATP synthase produces ATP from ADP in the presence of a proton or sodium gradient. F-type ATPases consist of two structural domains, F(1) containing the extramembraneous catalytic core and F(0) containing the membrane proton channel, linked together by a central stalk and a peripheral stalk. During catalysis, ATP synthesis in the catalytic domain of F(1) is coupled via a rotary mechanism of the central stalk subunits to proton translocation. Its function is as follows. Component of the F(0) channel, it forms part of the peripheral stalk, linking F(1) to F(0). The protein is ATP synthase subunit b of Aquifex aeolicus (strain VF5).